We begin with the raw amino-acid sequence, 249 residues long: MTKVLTDARSIRIKGRSFLALVLSPELPLDWWLGRLDDLASRSAGFFLGRPVVLDVADLEIDRKQLKSLLDELGQRNVRVMGIEGGRPSLFEPGMPPAMKGGRPAPDFEVPEVDPADPPKAGKGKAAAPITPEEVQPVRATASIIVREPVRSGQSVIFPEGDVTVVGSVASGAEIVAGGSVHIYGTLRGRALAGSVGNASARIFCRRLEAELLAIDGVYKTAEDMAPNLRGQSVQLWLEGDSIMAERLN.

The disordered stretch occupies residues 89-130; it reads SLFEPGMPPAMKGGRPAPDFEVPEVDPADPPKAGKGKAAAPI. Low complexity predominate over residues 119–129; sequence PKAGKGKAAAP.

The protein belongs to the MinC family. Interacts with MinD and FtsZ.

Cell division inhibitor that blocks the formation of polar Z ring septums. Rapidly oscillates between the poles of the cell to destabilize FtsZ filaments that have formed before they mature into polar Z rings. Prevents FtsZ polymerization. The sequence is that of Probable septum site-determining protein MinC from Rhizobium meliloti (strain 1021) (Ensifer meliloti).